Here is a 314-residue protein sequence, read N- to C-terminus: MAFLEDGNHTAVTGFILLGLTDDPVLRVVLFVIILCIYLVTVSGNLSTILLIRVSSQLHHPMYFFLSHLASADIGYSSSVTPNMLVNFLVERNTISYLGCGIQLGSAVFFGTVECFLLAAMAYDRFIAICSPLLYSNKMSTQVCVQLLVGSYIGGFLNASSFTLSFFSLVFCGPNRVNHFFCDFAPLVKLSCSDVSVPAVVPSFTAGSIIIVTIFVIAVSYIYILITILKMRSTEGRQKAFSTCTSHLTAVTLFYGTITFIYVMPKSSYSTDQNKVVSVFYMVVVPMLNPLIYSLRNKEIKGALKRQLAKNTFS.

Topologically, residues 1 to 28 (MAFLEDGNHTAVTGFILLGLTDDPVLRV) are extracellular. Asn-8 carries an N-linked (GlcNAc...) asparagine glycan. Residues 29-49 (VLFVIILCIYLVTVSGNLSTI) traverse the membrane as a helical segment. Topologically, residues 50-57 (LLIRVSSQ) are cytoplasmic. The chain crosses the membrane as a helical span at residues 58–78 (LHHPMYFFLSHLASADIGYSS). At 79–102 (SVTPNMLVNFLVERNTISYLGCGI) the chain is on the extracellular side. Cys-100 and Cys-192 are joined by a disulfide. A helical transmembrane segment spans residues 103 to 123 (QLGSAVFFGTVECFLLAAMAY). The Cytoplasmic portion of the chain corresponds to 124–136 (DRFIAICSPLLYS). A helical membrane pass occupies residues 137 to 157 (NKMSTQVCVQLLVGSYIGGFL). At 158–199 (NASSFTLSFFSLVFCGPNRVNHFFCDFAPLVKLSCSDVSVPA) the chain is on the extracellular side. The chain crosses the membrane as a helical span at residues 200–220 (VVPSFTAGSIIIVTIFVIAVS). The Cytoplasmic portion of the chain corresponds to 221 to 240 (YIYILITILKMRSTEGRQKA). Residues 241–261 (FSTCTSHLTAVTLFYGTITFI) traverse the membrane as a helical segment. The Extracellular segment spans residues 262–274 (YVMPKSSYSTDQN). A helical transmembrane segment spans residues 275–295 (KVVSVFYMVVVPMLNPLIYSL). The Cytoplasmic portion of the chain corresponds to 296–314 (RNKEIKGALKRQLAKNTFS).

This sequence belongs to the G-protein coupled receptor 1 family.

The protein localises to the cell membrane. Functionally, potential odorant receptor. In Mus musculus (Mouse), this protein is Olfactory receptor 5P76.